Reading from the N-terminus, the 236-residue chain is Purine nucleoside phosphorylase DeoD-type (236 aa).

Residue His-5 participates in a purine D-ribonucleoside binding. Phosphate contacts are provided by residues Gly-21, Arg-25, Arg-44, and 88 to 91 (RIGS). A purine D-ribonucleoside contacts are provided by residues 180-182 (EME) and 204-205 (SD). Asp-205 functions as the Proton donor in the catalytic mechanism.

The protein belongs to the PNP/UDP phosphorylase family. As to quaternary structure, homohexamer; trimer of homodimers.

The enzyme catalyses a purine D-ribonucleoside + phosphate = a purine nucleobase + alpha-D-ribose 1-phosphate. The catalysed reaction is a purine 2'-deoxy-D-ribonucleoside + phosphate = a purine nucleobase + 2-deoxy-alpha-D-ribose 1-phosphate. Catalyzes the reversible phosphorolytic breakdown of the N-glycosidic bond in the beta-(deoxy)ribonucleoside molecules, with the formation of the corresponding free purine bases and pentose-1-phosphate. The protein is Purine nucleoside phosphorylase DeoD-type of Tolumonas auensis (strain DSM 9187 / NBRC 110442 / TA 4).